The chain runs to 131 residues: Beta/delta-urticatoxin-Dm2a (131 aa).

The first 24 residues, 1–24 (MKSSATVVLLVAAVTAAMVMSSSA), serve as a signal peptide directing secretion. Positions 25 to 69 (SGDAVMIDEHNNIMTSVEGKRGIGSSVVANGGNRKMANVLLSGWE) are excised as a propeptide. Cystine bridges form between C72–C88, C79–C93, C87–C101, C103–C117, C110–C122, and C116–C130.

The protein belongs to the urticatoxin-2 family. Expressed in trichomes, that are stiff epidermal hairs located on the surface of petioles and leaves.

It is found in the secreted. Its function is as follows. Plant defense neurotoxin that causes pain and systemic symptoms in mammals via modulation of voltage-gated sodium channels (Nav). Potent modulator of human Nav1.5/SCN5A (EC(50)=55 nM), Nav1.6/SCN8A (EC(50)=0.86 nM), and Nav1.7/SCN9A (EC(50)=208 nM), where it shifts the activation threshold to more negative potentials and delays fast inactivation. Also shifts the voltage-dependence of steady-state fast inactivation of Nav1.6/SCN8A, but not that of Nav1.5/SCN5A or Nav1.7/SCN9A. On Nav1.7/SCN9A, principally acts by binding to extracellular loops of domain IV (Nav site 3). In vivo, intraplantar injection into mice causes numerous dose-dependent, immediate, and long-lasting spontaneous pain behaviors, while no swelling is observed in the injected paw. At the highest doses tested, systemic symptoms including hypokinesia and hypersalivation are observed. The chain is Beta/delta-urticatoxin-Dm2a from Dendrocnide moroides (Gympie stinging tree).